Consider the following 215-residue polypeptide: Protein N-lysine methyltransferase METTL21A (215 aa).

Residues W47, 73-75, D94, W125, and A141 contribute to the S-adenosyl-L-methionine site; that span reads GAG.

This sequence belongs to the methyltransferase superfamily. METTL21 family.

Its subcellular location is the cytoplasm. The enzyme catalyses L-lysyl-[protein] + 3 S-adenosyl-L-methionine = N(6),N(6),N(6)-trimethyl-L-lysyl-[protein] + 3 S-adenosyl-L-homocysteine + 3 H(+). Functionally, protein-lysine methyltransferase that selectively trimethylates residues in heat shock protein 70 (HSP70) family members. This is Protein N-lysine methyltransferase METTL21A (mettl21a) from Xenopus tropicalis (Western clawed frog).